We begin with the raw amino-acid sequence, 93 residues long: Integration host factor subunit beta (93 aa).

Belongs to the bacterial histone-like protein family. In terms of assembly, heterodimer of an alpha and a beta chain.

Its function is as follows. This protein is one of the two subunits of integration host factor, a specific DNA-binding protein that functions in genetic recombination as well as in transcriptional and translational control. The chain is Integration host factor subunit beta (ihfB) from Cereibacter sphaeroides (strain ATCC 17023 / DSM 158 / JCM 6121 / CCUG 31486 / LMG 2827 / NBRC 12203 / NCIMB 8253 / ATH 2.4.1.) (Rhodobacter sphaeroides).